We begin with the raw amino-acid sequence, 310 residues long: Ribosomal RNA large subunit methyltransferase F (310 aa).

This sequence belongs to the methyltransferase superfamily. METTL16/RlmF family.

Its subcellular location is the cytoplasm. The enzyme catalyses adenosine(1618) in 23S rRNA + S-adenosyl-L-methionine = N(6)-methyladenosine(1618) in 23S rRNA + S-adenosyl-L-homocysteine + H(+). Its function is as follows. Specifically methylates the adenine in position 1618 of 23S rRNA. In Psychromonas ingrahamii (strain DSM 17664 / CCUG 51855 / 37), this protein is Ribosomal RNA large subunit methyltransferase F.